Reading from the N-terminus, the 44-residue chain is Thymosin beta-4 (44 aa).

The disordered stretch occupies residues 1–44 (MSDKPDMGEIQKFNKSKLKKTETQEKNPLPSKETIEQEKQAGES). Serine 2 is subject to N-acetylserine. Position 2 is a phosphoserine (serine 2). At lysine 4 the chain carries N6-acetyllysine. Residue lysine 12 is modified to N6-acetyllysine; alternate. Residue lysine 12 forms a Glycyl lysine isopeptide (Lys-Gly) (interchain with G-Cter in SUMO2); alternate linkage. The residue at position 23 (threonine 23) is a Phosphothreonine. The residue at position 26 (lysine 26) is an N6-acetyllysine. Serine 31 bears the Phosphoserine mark. Lysine 32 is subject to N6-acetyllysine. Positions 33–44 (ETIEQEKQAGES) are enriched in basic and acidic residues. Residue threonine 34 is modified to Phosphothreonine. Lysine 39 is subject to N6-acetyllysine.

Belongs to the thymosin beta family. As to quaternary structure, identified in a complex composed of ACTA1, COBL, GSN AND TMSB4X. Interacts with SERPINB1. In terms of processing, acSDKP is inactivated by ACE, which removes the dipeptide Lys-Pro from its C-terminus.

It is found in the cytoplasm. The protein localises to the cytoskeleton. In terms of biological role, plays an important role in the organization of the cytoskeleton. Binds to and sequesters actin monomers (G actin) and therefore inhibits actin polymerization. Its function is as follows. Potent inhibitor of bone marrow derived stem cell differentiation. Acts by inhibits the entry of hematopoietic pluripotent stem cells into the S-phase. The chain is Thymosin beta-4 (TMSB4) from Notamacropus eugenii (Tammar wallaby).